Here is a 192-residue protein sequence, read N- to C-terminus: Transcription termination/antitermination protein NusG (192 aa).

It belongs to the NusG family.

Functionally, participates in transcription elongation, termination and antitermination. This Rickettsia prowazekii (strain Madrid E) protein is Transcription termination/antitermination protein NusG.